The following is a 141-amino-acid chain: Hemoglobin subunit alpha (141 aa).

Residues 1–141 form the Globin domain; that stretch reads VLSGDDKSNL…VSTVLTSKYR (141 aa). Serine 3 carries the post-translational modification Phosphoserine. 2 positions are modified to N6-succinyllysine: lysine 7 and lysine 11. Lysine 16 is modified (N6-acetyllysine; alternate). N6-succinyllysine; alternate is present on lysine 16. Tyrosine 24 carries the post-translational modification Phosphotyrosine. Lysine 40 is modified (N6-succinyllysine). Residue serine 49 is modified to Phosphoserine. Histidine 58 serves as a coordination point for O2. Histidine 87 is a binding site for heme b. Phosphoserine is present on serine 102. The residue at position 108 (threonine 108) is a Phosphothreonine. Phosphoserine is present on residues serine 124 and serine 131. Phosphothreonine occurs at positions 134 and 137. Serine 138 carries the post-translational modification Phosphoserine.

The protein belongs to the globin family. In terms of assembly, heterotetramer of two alpha chains and two beta chains. Red blood cells.

Its function is as follows. Involved in oxygen transport from the lung to the various peripheral tissues. The sequence is that of Hemoglobin subunit alpha from Microtus pennsylvanicus (Meadow vole).